We begin with the raw amino-acid sequence, 1408 residues long: ABC transporter B family member 20 (1408 aa).

Positions 14 to 49 are disordered; the sequence is HMQPLTPVSEVSEPPESPSPYLDPGAESGGGTGTAA. Residues 20–39 are compositionally biased toward low complexity; it reads PVSEVSEPPESPSPYLDPGA. A helical transmembrane segment spans residues 86–106; that stretch reads VLMIVGSVAAAAHGTALIVYL. One can recognise an ABC transmembrane type-1 1 domain in the interval 88–381; the sequence is MIVGSVAAAA…AATNFYSFDQ (294 aa). A glycan (N-linked (GlcNAc...) asparagine) is linked at Asn-120. Helical transmembrane passes span 141–161, 214–233, and 238–260; these read IVYI…CWIL, VGNY…IGFV, and IALI…NIFL. N-linked (GlcNAc...) asparagine glycosylation occurs at Asn-293. 2 helical membrane-spanning segments follow: residues 312–332 and 353–373; these read GILI…LAIC and GEII…NQAA. The 236-residue stretch at 414–649 folds into the ABC transporter 1 domain; sequence IEFRNVYFSY…GGLYAELLKC (236 aa). 449–456 is a binding site for ATP; it reads GRNGSGKS. Asn-451 carries N-linked (GlcNAc...) asparagine glycosylation. 2 disordered regions span residues 676-735 and 752-816; these read SSAG…SLDC and LPHL…DAQH. Residues 762–771 are compositionally biased toward polar residues; that stretch reads CPQQKSNGSE. Asn-768 is a glycosylation site (N-linked (GlcNAc...) asparagine). A compositionally biased stretch (basic and acidic residues) spans 802 to 816; it reads DDTKANGKASKDAQH. An ABC transmembrane type-1 2 domain is found at 836–1124; the sequence is AVLGSLGAAI…PFGLAPYILK (289 aa). The next 6 membrane-spanning stretches (helical) occupy residues 841–861, 881–901, 959–979, 983–1003, 1062–1082, and 1103–1123; these read LGAA…ALVV, LIIA…HFYF, IFIQ…LLGW, LVAL…KLWL, IGFA…LLLW, and MVFS…PYIL. Positions 1159-1396 constitute an ABC transporter 2 domain; that stretch reads IELKNVDFCY…NGLYVRLMQP (238 aa). Asn-1179 carries N-linked (GlcNAc...) asparagine glycosylation. 1194-1201 is a binding site for ATP; the sequence is GVSGSGKS. 2 N-linked (GlcNAc...) asparagine glycosylation sites follow: Asn-1261 and Asn-1347.

This sequence belongs to the ABC transporter superfamily. ABCB family. Multidrug resistance exporter (TC 3.A.1.201) subfamily. In terms of tissue distribution, expressed in aerial tissues.

It localises to the membrane. The catalysed reaction is (indol-3-yl)acetate(in) + ATP + H2O = (indol-3-yl)acetate(out) + ADP + phosphate + H(+). Probable auxin efflux transporter that contributes, together with ABCB6 and in a FKBP42/TWD1-dependent manner, to the regulation of leaf position and morphology, internode distribution, roots development, and inflorescence organization, probably by modulating auxin repartition. The polypeptide is ABC transporter B family member 20 (Arabidopsis thaliana (Mouse-ear cress)).